We begin with the raw amino-acid sequence, 555 residues long: Urocanate hydratase (555 aa).

Residues 51–52 (GG), Gln-129, 175–177 (GMG), Glu-195, Arg-200, 241–242 (NA), 262–266 (QTSAH), 272–273 (YL), and Tyr-321 contribute to the NAD(+) site. The active site involves Cys-409. Gly-491 provides a ligand contact to NAD(+).

This sequence belongs to the urocanase family. NAD(+) serves as cofactor.

It is found in the cytoplasm. It carries out the reaction 4-imidazolone-5-propanoate = trans-urocanate + H2O. It participates in amino-acid degradation; L-histidine degradation into L-glutamate; N-formimidoyl-L-glutamate from L-histidine: step 2/3. Its function is as follows. Catalyzes the conversion of urocanate to 4-imidazolone-5-propionate. This chain is Urocanate hydratase, found in Rhizorhabdus wittichii (strain DSM 6014 / CCUG 31198 / JCM 15750 / NBRC 105917 / EY 4224 / RW1) (Sphingomonas wittichii).